The primary structure comprises 930 residues: Nonribosomal peptide synthetase btyA (930 aa).

Residues 31–440 (ESPHRLTYAE…RGRSKELICI (410 aa)) are adenylation (A) domain. A Carrier domain is found at 570-647 (PAGNETETLL…VLARQLQDGH (78 aa)). The residue at position 607 (serine 607) is an O-(pantetheine 4'-phosphoryl)serine. The segment at 667–920 (PLWLIHPIGG…EDNVHKVYRV (254 aa)) is thioesterase (TE) domain.

It belongs to the NRP synthetase family.

The catalysed reaction is 2 3-(4-hydroxyphenyl)pyruvate + H(+) = (2S)-2-(4-hydoxybenzyl)-3-(4-hydroxyphenyl)-2-furonol carboxylate + H2O. The protein operates within secondary metabolite biosynthesis. In terms of biological role, nonribosomal peptide synthetase; part of the gene cluster that mediates the biosynthesis of butyrolactones, natural products that show a wide range of biological activities such as antitumor, antiparasitic or anti-inflammatory activity. The nonribosomal peptide synthetase btyA is responsible for the production of butyrolactone II, the core structure of butyrolactones. BtyA first activates 4-hydroxyphenylpyruvate (HPPA) through its A domain to AMP-HPPA. The HPPA unit is then loaded to the T domain and eventually transferred to the TE domain. Upon loading of another HPPA unit to the T domain, the TE domain promotes the enolate formation on the unit attached. Then aldol condensation establishes the carbon-carbon bond between the two units, followed by ester cyclization, and keto-enol tautomerization to yield the gamma-butyrolactone core. Hydrolysis, and finally esterification of the exposed carboxylic acid group yields butyrolactone II. Two additional enzymes, a prenyltransferase and an epoxidase, may be involved in the tailoring modifications of butyrolactone II to give butyrolactone III and butyrolactone I. The chain is Nonribosomal peptide synthetase btyA from Aspergillus terreus (strain NIH 2624 / FGSC A1156).